We begin with the raw amino-acid sequence, 474 residues long: BPI fold-containing family B member 1 (474 aa).

The N-terminal stretch at Met1–Ala21 is a signal peptide. N-linked (GlcNAc...) asparagine glycosylation is found at Asn153, Asn160, Asn263, and Asn400. Cys157 and Cys200 are disulfide-bonded.

Belongs to the BPI/LBP/Plunc superfamily. Plunc family. In terms of tissue distribution, expressed in tongue, lung, thymus, and stomach. Expressed in epithelia of palate, anterior pharynx, trachea and upper bronchi. Expressed in distal tip of papillae in the anterior third of the tongue and in serous cells of von Ebner glands in the posterior third of the tongue. Expressed in columnar epithelium of the duodenum in embryonic gut at 16.5 dpc.

The protein resides in the secreted. Functionally, may play a role in innate immunity in mouth, nose and lungs. Binds bacterial lipopolysaccharide (LPS) and modulates the cellular responses to LPS. May be involved in formation of the left-right axis in the node of the developing embryo. This Mus musculus (Mouse) protein is BPI fold-containing family B member 1 (Bpifb1).